The chain runs to 113 residues: Putative hemolysin E-like protein (113 aa).

This sequence belongs to the hemolysin E family.

The sequence is that of Putative hemolysin E-like protein from Shigella flexneri.